We begin with the raw amino-acid sequence, 705 residues long: Probable E3 ubiquitin-protein ligase MID2 (705 aa).

The segment at 30–80 (CPICLELFEDPLLLPCAHSLCFSCAHRILVSSCSSGESIEPITAFQCPTCR) adopts an RING-type zinc-finger fold. Residues 137–184 (IACQFCEQDPPRDAVKTCITCEVSYCDRCLRATHPNKKPFTSHRLVEP) form a B box-type 1; degenerate zinc finger. The B box-type 2 zinc-finger motif lies at 190-232 (LRGITCLDHENEKVNMYCVSDDQLICALCKLVGRHRDHQVASL). C195, H198, C218, and H224 together coordinate Zn(2+). The stretch at 233–301 (NDRFEKLKQT…IIQQRKQMIA (69 aa)) forms a coiled coil. In terms of domain architecture, COS spans 340–399 (LKENDQARFLQSAKNIAERVAMATASSQVLIPDINFNDAFENFALDFSREKKLLEGLDYL). The 101-residue stretch at 404 to 504 (PPSIREELCT…EPTRLKTNSQ (101 aa)) folds into the Fibronectin type-III domain. One can recognise a B30.2/SPRY domain in the interval 486–679 (INQAGSRNSE…ILSGLPAPDF (194 aa)).

The protein belongs to the TRIM/RBCC family. In terms of assembly, homodimer or heterodimer with MID1. Interacts with IGBP1. Phosphorylated on serine and threonine residues. As to expression, low abundance in brain and lung, with even lower levels in heart, liver, and kidney.

It is found in the cytoplasm. Its subcellular location is the cytoskeleton. It carries out the reaction S-ubiquitinyl-[E2 ubiquitin-conjugating enzyme]-L-cysteine + [acceptor protein]-L-lysine = [E2 ubiquitin-conjugating enzyme]-L-cysteine + N(6)-ubiquitinyl-[acceptor protein]-L-lysine.. It functions in the pathway protein modification; protein ubiquitination. Its function is as follows. E3 ubiquitin ligase that plays a role in microtubule stabilization. Mediates the 'Lys-48'-linked polyubiquitination of LRRK2 to drive its localization to microtubules and its proteasomal degradation in neurons. This ubiquitination inhibits LRRK2 kinase activation by RAB29. The sequence is that of Probable E3 ubiquitin-protein ligase MID2 (Mid2) from Mus musculus (Mouse).